The primary structure comprises 471 residues: Secretogranin-3 (471 aa).

A signal peptide spans 1–22 (MGFLWTGSWILVLVLNSGPIQA). Disordered stretches follow at residues 24–45 (PKPE…ERPL), 89–108 (TVEK…QLNV), and 345–404 (KLEK…TDEA). The segment covering 28 to 45 (GSQDKSLHNRELSAERPL) has biased composition (basic and acidic residues). A Phosphoserine modification is found at S40. The O-linked (Xyl...) (chondroitin sulfate) serine glycan is linked to S40. Composition is skewed to basic and acidic residues over residues 345–355 (KLEKNTTDSKS) and 364–404 (KSQE…TDEA). At S365 the chain carries Phosphoserine.

In terms of assembly, interacts with CHGA. Interacts with secretogranin II/SCG2. Interacts (via C-terminus) with CPE. In terms of tissue distribution, expressed in various brain areas, with highest levels in the arcuate nucleus and the lateral hypothalamic area, as well as the paraventricular nucleus and the ventromedial hypothalamus (at protein level).

The protein localises to the cytoplasmic vesicle. The protein resides in the secretory vesicle. Its subcellular location is the secretory vesicle membrane. It localises to the secreted. Member of the granin protein family that regulates the biogenesis of secretory granules. Acts as a sorting receptor for intragranular proteins including chromogranin A/CHGA. May also play a role in angiogenesis. Promotes endothelial proliferation, migration and tube formation through MEK/ERK signaling pathway. The polypeptide is Secretogranin-3 (Scg3) (Mus musculus (Mouse)).